Here is a 1072-residue protein sequence, read N- to C-terminus: Carbamoyl phosphate synthase large chain (1072 aa).

Residues 1–401 (MPKRLDINTI…SLLKAVRSLE (401 aa)) are carboxyphosphate synthetic domain. The ATP site is built by arginine 129, arginine 169, glycine 175, glycine 176, lysine 208, isoleucine 210, glutamate 215, glycine 241, valine 242, histidine 243, glutamine 284, and glutamate 298. An ATP-grasp 1 domain is found at 133-327 (RTLMQDLNEP…IAKLAAKIAV (195 aa)). Mg(2+) is bound by residues glutamine 284, glutamate 298, and asparagine 300. Mn(2+) is bound by residues glutamine 284, glutamate 298, and asparagine 300. Residues 402–546 (LGIYHLELDH…YSTYADENES (145 aa)) form an oligomerization domain region. Residues 547–929 (IVTDRKSVVV…ALYKGLVASG (383 aa)) form a carbamoyl phosphate synthetic domain region. The region spanning 671–861 (EAALTKLGIP…MANVATKVIL (191 aa)) is the ATP-grasp 2 domain. Arginine 707, arginine 746, glutamate 752, glycine 777, valine 778, histidine 779, serine 780, glutamine 820, and glutamate 832 together coordinate ATP. 3 residues coordinate Mg(2+): glutamine 820, glutamate 832, and asparagine 834. Glutamine 820, glutamate 832, and asparagine 834 together coordinate Mn(2+). An MGS-like domain is found at 930 to 1072 (INIPTHGSVI…QTKRHEVVHA (143 aa)). Positions 930-1072 (INIPTHGSVI…QTKRHEVVHA (143 aa)) are allosteric domain.

It belongs to the CarB family. Composed of two chains; the small (or glutamine) chain promotes the hydrolysis of glutamine to ammonia, which is used by the large (or ammonia) chain to synthesize carbamoyl phosphate. Tetramer of heterodimers (alpha,beta)4. Mg(2+) is required as a cofactor. The cofactor is Mn(2+).

It catalyses the reaction hydrogencarbonate + L-glutamine + 2 ATP + H2O = carbamoyl phosphate + L-glutamate + 2 ADP + phosphate + 2 H(+). It carries out the reaction hydrogencarbonate + NH4(+) + 2 ATP = carbamoyl phosphate + 2 ADP + phosphate + 2 H(+). It functions in the pathway amino-acid biosynthesis; L-arginine biosynthesis; carbamoyl phosphate from bicarbonate: step 1/1. Its pathway is pyrimidine metabolism; UMP biosynthesis via de novo pathway; (S)-dihydroorotate from bicarbonate: step 1/3. Large subunit of the glutamine-dependent carbamoyl phosphate synthetase (CPSase). CPSase catalyzes the formation of carbamoyl phosphate from the ammonia moiety of glutamine, carbonate, and phosphate donated by ATP, constituting the first step of 2 biosynthetic pathways, one leading to arginine and/or urea and the other to pyrimidine nucleotides. The large subunit (synthetase) binds the substrates ammonia (free or transferred from glutamine from the small subunit), hydrogencarbonate and ATP and carries out an ATP-coupled ligase reaction, activating hydrogencarbonate by forming carboxy phosphate which reacts with ammonia to form carbamoyl phosphate. The protein is Carbamoyl phosphate synthase large chain of Bacillus cereus (strain AH187).